The chain runs to 143 residues: Transcriptional regulator MraZ (143 aa).

SpoVT-AbrB domains lie at 5 to 47 (EYQH…PQDE) and 76 to 119 (ATEC…SKER).

Belongs to the MraZ family. Forms oligomers.

The protein localises to the cytoplasm. Its subcellular location is the nucleoid. The chain is Transcriptional regulator MraZ from Brevibacillus brevis (strain 47 / JCM 6285 / NBRC 100599).